We begin with the raw amino-acid sequence, 69 residues long: uncharacterized protein (69 aa).

This is an uncharacterized protein from Vaccinia virus (strain Copenhagen) (VACV).